Reading from the N-terminus, the 278-residue chain is MALKTFNPTTPSQRQLVIVDRSSLYKGKPVKALTEGLTKSGGRNNLGRITARFIGGGHKRSYRLVDFKRRKFDIEGTVERIEYDPNRTAFIALVTYSDGEQAYIIAPQRLAAGDKVIASEKAVDVKPGNTMPLQYIPVGSIIHNVEMKPGKGGQIARSAGSYAQLVGRDQGMAILRLNSGEQRLVSGVCLASIGAVSNPDHANINDGKAGRTVWRGKRPHNRGVVMNPVDHPHGGGEGRTSGGRHPVTPWGKPTKGKRTRSNKSTDKMIMRSRHQRKK.

The tract at residues 218 to 278 (RPHNRGVVMN…IMRSRHQRKK (61 aa)) is disordered.

It belongs to the universal ribosomal protein uL2 family. In terms of assembly, part of the 50S ribosomal subunit. Forms a bridge to the 30S subunit in the 70S ribosome.

In terms of biological role, one of the primary rRNA binding proteins. Required for association of the 30S and 50S subunits to form the 70S ribosome, for tRNA binding and peptide bond formation. It has been suggested to have peptidyltransferase activity; this is somewhat controversial. Makes several contacts with the 16S rRNA in the 70S ribosome. The polypeptide is Large ribosomal subunit protein uL2 (Rhizobium etli (strain ATCC 51251 / DSM 11541 / JCM 21823 / NBRC 15573 / CFN 42)).